A 97-amino-acid chain; its full sequence is Large ribosomal subunit protein uL23 (97 aa).

It belongs to the universal ribosomal protein uL23 family. Part of the 50S ribosomal subunit. Contacts protein L29, and trigger factor when it is bound to the ribosome.

Functionally, one of the early assembly proteins it binds 23S rRNA. One of the proteins that surrounds the polypeptide exit tunnel on the outside of the ribosome. Forms the main docking site for trigger factor binding to the ribosome. This chain is Large ribosomal subunit protein uL23, found in Lactococcus lactis subsp. cremoris (strain SK11).